Reading from the N-terminus, the 359-residue chain is Peptide chain release factor 1 (359 aa).

The residue at position 235 (glutamine 235) is an N5-methylglutamine. Residues 284–311 (KAESERSASRKNQVGSGDRSERIRTYNF) form a disordered region.

This sequence belongs to the prokaryotic/mitochondrial release factor family. In terms of processing, methylated by PrmC. Methylation increases the termination efficiency of RF1.

Its subcellular location is the cytoplasm. Functionally, peptide chain release factor 1 directs the termination of translation in response to the peptide chain termination codons UAG and UAA. In Bartonella quintana (strain Toulouse) (Rochalimaea quintana), this protein is Peptide chain release factor 1.